Consider the following 50-residue polypeptide: Thrombin-like enzyme BpirSP27 (50 aa).

Positions 1–50 (VVGGDECNINEHRSLVAIFNSTGFFCSGILLNQEWVLTASHCDSTNFQMK) constitute a Peptidase S1 domain. Asparagine 20 is a glycosylation site (N-linked (GlcNAc...) asparagine). A disulfide bridge links cysteine 26 with cysteine 42. The active-site Charge relay system is the histidine 41.

It belongs to the peptidase S1 family. Snake venom subfamily. In terms of assembly, monomer. In terms of processing, N-glycosylated. Expressed by the venom gland.

Its subcellular location is the secreted. Its activity is regulated as follows. Inhibited by serine protease inhibitors PMSF, benzamidine, leupeptin and aprotinin, as well as by copper (Cu2+) and manganese (Mn2+) ions. Not inhibited by metalloprotease inhibitors EDTA, EGTA and 1,10-phenanthroline, as well as by barium (Ba2+) and calcium ion (Ca2+). Functionally, snake venom serine protease that interferes with the hemostatic system of the prey. It preferentially degrades the Bbeta chain (FGB) of fibrinogen, with minor effects on the Aalpha chain (FGA). It presents a lower ability to degrade fibrin clots than BpirSP41. It hydrolyzes chromogenic substrates S-2238 (used for testing thrombin activity), S-2222 (factor Xa), S-2266 (glandular kallikrein and factor XIa), S-2302 (plasma kallikrein, factor XIa and XIIa), and S-2251 (plasmin). It shows a decrease in the clotting time of human plasma in the presence of increasing doses of the enzyme. Its minimum coagulant dose (MCD) is 3.5 ug. It also promotes platelet aggregation in a concentration-dependent manner in the presence or absence of calcium. It also shows 20% inhibition of the hemolytic activity promoted by the complement pathways and possess only a minor role in the induction of edema and pain in rat. The protein is Thrombin-like enzyme BpirSP27 of Bothrops pirajai (Piraja's lancehead).